Here is a 350-residue protein sequence, read N- to C-terminus: Heat-inducible transcription repressor HrcA (350 aa).

The protein belongs to the HrcA family.

Negative regulator of class I heat shock genes (grpE-dnaK-dnaJ and groELS operons). Prevents heat-shock induction of these operons. The polypeptide is Heat-inducible transcription repressor HrcA (Xanthomonas campestris pv. campestris (strain ATCC 33913 / DSM 3586 / NCPPB 528 / LMG 568 / P 25)).